A 26-amino-acid polypeptide reads, in one-letter code: Melittin (26 aa).

Residue Gly1 is modified to N-formylglycine; partial. Glu26 is subject to Glutamic acid 1-amide.

Belongs to the melittin family. Monomer (in solution and for integration into membranes), homotetramer (in solution and potentially as a toroidal pore in membranes), and potenially homomultimer (as a toroidal pore in membranes). As to expression, expressed by the venom gland.

It is found in the secreted. It localises to the target cell membrane. Its function is as follows. Main toxin of bee venom with strong hemolytic activity and antimicrobial activity. It has enhancing effects on bee venom phospholipase A2 activity. This amphipathic toxin binds to negatively charged membrane surface and forms pore by inserting into lipid bilayers inducing the leakage of ions and molecules and the enhancement of permeability that ultimately leads to cell lysis. It acts as a voltage-gated pore with higher selectivity for anions over cations. The ion conductance has been shown to be voltage-dependent. Self-association of melittin in membranes is promoted by high ionic strength, but not by the presence of negatively charged lipids. In vivo, intradermal injection into healthy human volunteers produce sharp pain sensation and an inflammatory response. It produces pain by activating primary nociceptor cells directly and indirectly due to its ability to activate plasma membrane phospholipase A2 and its pore-forming activity. The polypeptide is Melittin (MELT) (Apis dorsata (Giant honeybee)).